We begin with the raw amino-acid sequence, 233 residues long: Orotidine 5'-phosphate decarboxylase (233 aa).

Residues D13, K35, 62 to 71 (DLKFHDIPNT), T122, R182, Q191, G211, and R212 contribute to the substrate site. Catalysis depends on K64, which acts as the Proton donor.

It belongs to the OMP decarboxylase family. Type 1 subfamily. Homodimer.

The catalysed reaction is orotidine 5'-phosphate + H(+) = UMP + CO2. It functions in the pathway pyrimidine metabolism; UMP biosynthesis via de novo pathway; UMP from orotate: step 2/2. Catalyzes the decarboxylation of orotidine 5'-monophosphate (OMP) to uridine 5'-monophosphate (UMP). The sequence is that of Orotidine 5'-phosphate decarboxylase from Pseudomonas fluorescens (strain ATCC BAA-477 / NRRL B-23932 / Pf-5).